We begin with the raw amino-acid sequence, 458 residues long: NADH-quinone oxidoreductase subunit N (458 aa).

14 helical membrane passes run 2–22 (LLLLPEITLTLIALLGQCFAL), 30–50 (IIYNIVILLCIISIFLTFKYS), 71–91 (IILLFTIVSLIIYRDYSILVG), 93–113 (TLKFEFITLMLLSIVGIFVAI), 118–138 (FLLLFCGMELTALTSYALAGF), 153–173 (FILGSLVSCLSLFGISFIYGF), 196–216 (LIIGIVLFLSSIFFKLASSPL), 235–255 (FTAASKIGMVIVLLNISKLII), 261–281 (INYNLIKIIAILSMLFGAFGA), 290–310 (LMAYSTILNIGYVLIGVLLHN), 319–339 (LYILIYAVVSIGFFTCLIMLF), 361–381 (IAALISIVMFSMIGIPPLTGF), 397–417 (FTLAYCGIFTSVVAAFYYLKV), and 438–458 (LLLINYLVLGFLLFGSFIILF).

This sequence belongs to the complex I subunit 2 family. In terms of assembly, NDH-1 is composed of 14 different subunits. Subunits NuoA, H, J, K, L, M, N constitute the membrane sector of the complex.

Its subcellular location is the cell inner membrane. It carries out the reaction a quinone + NADH + 5 H(+)(in) = a quinol + NAD(+) + 4 H(+)(out). Its function is as follows. NDH-1 shuttles electrons from NADH, via FMN and iron-sulfur (Fe-S) centers, to quinones in the respiratory chain. The immediate electron acceptor for the enzyme in this species is believed to be ubiquinone. Couples the redox reaction to proton translocation (for every two electrons transferred, four hydrogen ions are translocated across the cytoplasmic membrane), and thus conserves the redox energy in a proton gradient. The protein is NADH-quinone oxidoreductase subunit N of Rickettsia prowazekii (strain Madrid E).